Consider the following 566-residue polypeptide: Sorting nexin lst-4 (566 aa).

The 61-residue stretch at 1 to 61 folds into the SH3 domain; sequence MAQVKAEYDF…PESYVTPYQA (61 aa). The tract at residues 59–179 is disordered; the sequence is YQASRPPPVL…DRGSNKVNKN (121 aa). The span at 63–77 shows a compositional bias: pro residues; sequence RPPPVLPPPLPPTSS. Positions 127–140 are enriched in acidic residues; the sequence is DDFDDEWTDEDDEQ. The segment covering 143–154 has biased composition (polar residues); that stretch reads TRPNVQSSIGSN. Residues 155-173 are compositionally biased toward basic and acidic residues; the sequence is SRRDLSRSHSEHGGPDRGS. Residues 227 to 339 form the PX domain; the sequence is YTCIVDKPKK…HFISCTDEKD (113 aa). Residues 362-566 form the BAR domain; the sequence is TVPHQPLDPN…KLTSLAARYD (205 aa).

Belongs to the sorting nexin family. Homodimer. Isoform d interacts (via SH3 domain) with dyn-1. Expressed in vulval precursor cells (VPCs) and apoptotic germ cells. Colocalizes with actin, dyn-1 and rab-5 in early phagosomes.

The protein resides in the cytoplasm. The protein localises to the cytoplasmic vesicle. Its subcellular location is the phagosome membrane. In terms of biological role, involved in the signaling of vulval development by acting as a negative regulator of epidermal growth factor receptor (EGFR) signaling. Aids in phagosomal membrane tubule formation which is required for phagosomal fusion with endosomes and lysosomes. Also recruits rab-7 to phagosomes by an interaction with dyn-1. These are events leading to phagosome maturation which is a step in apoptotic cell corpse clearance. Binds phosphatidylinositol-3,4,5-trisphosphate. The polypeptide is Sorting nexin lst-4 (Caenorhabditis elegans).